The primary structure comprises 98 residues: NADH-ubiquinone oxidoreductase chain 4L (98 aa).

The next 3 membrane-spanning stretches (helical) occupy residues 1–21 (MTPV…GLAF), 29–49 (ALLC…LWAL), and 59–79 (APML…ALLV).

It belongs to the complex I subunit 4L family.

The protein resides in the mitochondrion membrane. The catalysed reaction is a ubiquinone + NADH + 5 H(+)(in) = a ubiquinol + NAD(+) + 4 H(+)(out). Its function is as follows. Core subunit of the mitochondrial membrane respiratory chain NADH dehydrogenase (Complex I) which catalyzes electron transfer from NADH through the respiratory chain, using ubiquinone as an electron acceptor. Part of the enzyme membrane arm which is embedded in the lipid bilayer and involved in proton translocation. This chain is NADH-ubiquinone oxidoreductase chain 4L (MT-ND4L), found in Carassius auratus (Goldfish).